The primary structure comprises 507 residues: RNA-binding protein Nova-1 (507 aa).

The disordered stretch occupies residues 1–44 (MMAAAPIQQNGTHTGVPIDLDPPDSRKRPLEAPPEAGSTKRTNT). Positions 27-43 (KRPLEAPPEAGSTKRTN) match the Bipartite nuclear localization signal motif. The KH 1 domain maps to 49–116 (QYFLKVLIPS…EALNAVHGFI (68 aa)). Positions 139–171 (QTTVNPDRIKQTLPSSPTTTKSSPSDPMTTSRA) are disordered. The segment covering 150–169 (TLPSSPTTTKSSPSDPMTTS) has biased composition (low complexity). Residue serine 154 is modified to Phosphoserine. KH domains lie at 171 to 237 (ANQV…VELI) and 421 to 488 (KDVV…QYLI). The required for RNA binding stretch occupies residues 419-503 (GSKDVVEIAV…YEQGVRAANP (85 aa)).

In terms of assembly, interacts with PTBP2; the interaction is direct. In terms of tissue distribution, expressed in cerebellum, brain stem, hippocampus, and frontal cortex.

Its subcellular location is the nucleus. Its function is as follows. Functions to regulate alternative splicing in neurons by binding pre-mRNA in a sequence-specific manner to activate exon inclusion or exclusion. It binds specifically to the sequences 5'-YCAY-3' and regulates splicing in only a subset of regulated exons. Binding to an exonic 5'-YCAY-3' cluster changes the protein complexes assembled on pre-mRNA, blocking U1 snRNP binding and exon inclusion, whereas binding to an intronic 5'-YCAY-3' cluster enhances spliceosome assembly and exon inclusion. Binding to 5'-YCAY-3' clusters results in a local and asymmetric action to regulate spliceosome assembly and alternative splicing in neurons. Binding to an exonic 5'-YCAY-3' cluster changed the protein complexes assembled on pre-mRNA, blocking U1 snRNP (small nuclear ribonucleoprotein) binding and exon inclusion, whereas binding to an intronic 5'-YCAY-3' cluster enhanced spliceosome assembly and exon inclusion. With NOVA1, they perform unique biological functions in different brain areas and cell types. Autoregulates its own expression by acting as a splicing repressor. Acts to activate the inclusion of exon E3A in the glycine receptor alpha-2 chain and of exon E9 in gamma-aminobutyric-acid receptor gamma-2 subunit via a distal downstream UCAU-rich intronic splicing enhancer. Acts to regulate a novel glycine receptor alpha-2 chain splice variant (alpha-2N) in developing spinal cord. This is RNA-binding protein Nova-1 from Homo sapiens (Human).